Consider the following 321-residue polypeptide: Sideroflexin-3 (321 aa).

N-acetylmethionine is present on Met1. The next 4 helical transmembrane spans lie at 146–164 (LGTAYVSATTGAVATALGL), 174–194 (LVGRFVPFAAVAAANCINIPL), 225–245 (IFQVVISRIGMAIPAMAIPPV), and 266–286 (LQVGLVGFCLVFATPLCCALF).

Belongs to the sideroflexin family. In terms of tissue distribution, widely expressed.

It localises to the mitochondrion membrane. The enzyme catalyses L-serine(in) = L-serine(out). Functionally, mitochondrial serine transporter that mediates transport of serine into mitochondria, an important step of the one-carbon metabolism pathway. Mitochondrial serine is converted to glycine and formate, which then exits to the cytosol where it is used to generate the charged folates that serve as one-carbon donors. The chain is Sideroflexin-3 from Mus musculus (Mouse).